Reading from the N-terminus, the 188-residue chain is Crossover junction endodeoxyribonuclease RuvC (188 aa).

Active-site residues include Asp7, Glu68, and Asp141. Asp7, Glu68, and Asp141 together coordinate Mg(2+).

It belongs to the RuvC family. Homodimer which binds Holliday junction (HJ) DNA. The HJ becomes 2-fold symmetrical on binding to RuvC with unstacked arms; it has a different conformation from HJ DNA in complex with RuvA. In the full resolvosome a probable DNA-RuvA(4)-RuvB(12)-RuvC(2) complex forms which resolves the HJ. Mg(2+) serves as cofactor.

It is found in the cytoplasm. It carries out the reaction Endonucleolytic cleavage at a junction such as a reciprocal single-stranded crossover between two homologous DNA duplexes (Holliday junction).. The RuvA-RuvB-RuvC complex processes Holliday junction (HJ) DNA during genetic recombination and DNA repair. Endonuclease that resolves HJ intermediates. Cleaves cruciform DNA by making single-stranded nicks across the HJ at symmetrical positions within the homologous arms, yielding a 5'-phosphate and a 3'-hydroxyl group; requires a central core of homology in the junction. The consensus cleavage sequence is 5'-(A/T)TT(C/G)-3'. Cleavage occurs on the 3'-side of the TT dinucleotide at the point of strand exchange. HJ branch migration catalyzed by RuvA-RuvB allows RuvC to scan DNA until it finds its consensus sequence, where it cleaves and resolves the cruciform DNA. This is Crossover junction endodeoxyribonuclease RuvC from Mycobacterium leprae (strain TN).